A 132-amino-acid polypeptide reads, in one-letter code: Large ribosomal subunit protein bL17 (132 aa).

The protein belongs to the bacterial ribosomal protein bL17 family. As to quaternary structure, part of the 50S ribosomal subunit. Contacts protein L32.

The sequence is that of Large ribosomal subunit protein bL17 from Saccharophagus degradans (strain 2-40 / ATCC 43961 / DSM 17024).